We begin with the raw amino-acid sequence, 504 residues long: MQQSTPYLSFRGIGKTFPGVKALTDISFDCYAGQVHALMGENGAGKSTLLKILSGNYAPTTGSVVINGQEMSFSDTTAALNAGVAIIYQELHLVPEMTVAENIYLGQLPHKGGIVNRSLLNYEAGLQLKHLGMDIDPDTPLKYLSIGQWQMVEIAKALARNAKIIAFDEPTSSLSAREIDNLFRVIRELRKEGRVILYVSHRMEEIFALSDAITVFKDGRYVRTFTDMQQVDHDALVQAMVGRDIGDIYGWQPRSYGEERLRLDAVKAPGVRTPISLAVRSGEIVGLFGLVGAGRSELMKGMFGGTQITAGQVYIDQQPIDIRKPSHAIAAGMMLCPEDRKAEGIIPVHSVRDNINISARRKHVLGGCVINNGWEENNADHHIRSLNIKTPGAEQLIMNLSGGNQQKAILGRWLSEEMKVILLDEPTRGIDVGAKHEIYNVIYALAAQGVAVLFASSDLPEVLGVADRIVVMREGEIAGELLHEQADERQALSLAMPKVSQAVA.

ABC transporter domains follow at residues 8 to 243 and 256 to 499; these read LSFR…MVGR and YGEE…MPKV. 40 to 47 lines the ATP pocket; sequence GENGAGKS.

This sequence belongs to the ABC transporter superfamily. Arabinose importer (TC 3.A.1.2.2) family. The complex is composed of two ATP-binding proteins (AraG), two transmembrane proteins (AraH) and a solute-binding protein (AraF).

It is found in the cell inner membrane. The enzyme catalyses L-arabinose(out) + ATP + H2O = L-arabinose(in) + ADP + phosphate + H(+). Its function is as follows. Part of the ABC transporter complex AraFGH involved in arabinose import. Responsible for energy coupling to the transport system. This chain is Arabinose import ATP-binding protein AraG, found in Shigella dysenteriae serotype 1 (strain Sd197).